We begin with the raw amino-acid sequence, 76 residues long: uncharacterized protein (76 aa).

This is an uncharacterized protein from Homo sapiens (Human).